The primary structure comprises 267 residues: 4-hydroxy-tetrahydrodipicolinate reductase (267 aa).

Residues 9-14 and Asp35 contribute to the NAD(+) site; that span reads GVSGRM. An NADP(+)-binding site is contributed by Arg36. NAD(+) contacts are provided by residues 98–100 and 122–125; these read GTT and APNM. The active-site Proton donor/acceptor is His155. His156 is a binding site for (S)-2,3,4,5-tetrahydrodipicolinate. Lys159 serves as the catalytic Proton donor. 165-166 provides a ligand contact to (S)-2,3,4,5-tetrahydrodipicolinate; it reads GT.

This sequence belongs to the DapB family.

Its subcellular location is the cytoplasm. The catalysed reaction is (S)-2,3,4,5-tetrahydrodipicolinate + NAD(+) + H2O = (2S,4S)-4-hydroxy-2,3,4,5-tetrahydrodipicolinate + NADH + H(+). It carries out the reaction (S)-2,3,4,5-tetrahydrodipicolinate + NADP(+) + H2O = (2S,4S)-4-hydroxy-2,3,4,5-tetrahydrodipicolinate + NADPH + H(+). Its pathway is amino-acid biosynthesis; L-lysine biosynthesis via DAP pathway; (S)-tetrahydrodipicolinate from L-aspartate: step 4/4. Its function is as follows. Catalyzes the conversion of 4-hydroxy-tetrahydrodipicolinate (HTPA) to tetrahydrodipicolinate. The sequence is that of 4-hydroxy-tetrahydrodipicolinate reductase from Thiobacillus denitrificans (strain ATCC 25259 / T1).